Here is a 78-residue protein sequence, read N- to C-terminus: MSESELGRKWDRCLADAVVKIGTGFGLGIVFSLTFFKRRMWPLAFGSGMGLGMAYSNCQHDFQAPYLLHGKYVKEQEQ.

Residue Ser-2 is modified to N-acetylserine. Residues 17–36 (AVVKIGTGFGLGIVFSLTFF) traverse the membrane as a helical segment. Over 37-78 (KRRMWPLAFGSGMGLGMAYSNCQHDFQAPYLLHGKYVKEQEQ) the chain is Mitochondrial intermembrane.

Belongs to the MICOS complex subunit Mic10 family. In terms of assembly, component of the mitochondrial contact site and cristae organizing system (MICOS) complex, composed of at least MICOS10/MIC10, CHCHD3/MIC19, CHCHD6/MIC25, APOOL/MIC27, IMMT/MIC60, APOO/MIC23/MIC26 and MICOS13/MIC13. This complex was also known under the names MINOS or MitOS complex. The MICOS complex associates with mitochondrial outer membrane proteins SAMM50, MTX1 and MTX2 (together described as components of the mitochondrial outer membrane sorting assembly machinery (SAM) complex) and DNAJC11, mitochondrial inner membrane protein TMEM11 and with HSPA9. The MICOS and SAM complexes together with DNAJC11 are part of a large protein complex spanning both membranes termed the mitochondrial intermembrane space bridging (MIB) complex. Interacts with IMMT/MIC60 and MICOS13/MIC13. Interacts with APOO/MIC23/MIC26 and APOOL/MIC27. Interacts with ARMC1.

The protein localises to the mitochondrion inner membrane. Component of the MICOS complex, a large protein complex of the mitochondrial inner membrane that plays crucial roles in the maintenance of crista junctions, inner membrane architecture, and formation of contact sites to the outer membrane. The polypeptide is MICOS complex subunit MIC10 (Homo sapiens (Human)).